Reading from the N-terminus, the 147-residue chain is Hemoglobin subunit beta (147 aa).

V2 bears the N-acetylvaline mark. Residues 3 to 147 (HLTAEEKAAV…VATALAHKYH (145 aa)) form the Globin domain. T13 carries the post-translational modification Phosphothreonine. Position 45 is a phosphoserine (S45). At K60 the chain carries N6-acetyllysine. H64 serves as a coordination point for heme b. K83 is subject to N6-acetyllysine. H93 lines the heme b pocket. C94 carries the post-translational modification S-nitrosocysteine. K145 is modified (N6-acetyllysine).

It belongs to the globin family. Heterotetramer of two alpha chains and two beta chains. Red blood cells.

Functionally, involved in oxygen transport from the lung to the various peripheral tissues. This is Hemoglobin subunit beta (HBB) from Carlito syrichta (Philippine tarsier).